The primary structure comprises 189 residues: Probable nicotinate-nucleotide adenylyltransferase (189 aa).

It belongs to the NadD family.

It catalyses the reaction nicotinate beta-D-ribonucleotide + ATP + H(+) = deamido-NAD(+) + diphosphate. It participates in cofactor biosynthesis; NAD(+) biosynthesis; deamido-NAD(+) from nicotinate D-ribonucleotide: step 1/1. Functionally, catalyzes the reversible adenylation of nicotinate mononucleotide (NaMN) to nicotinic acid adenine dinucleotide (NaAD). This is Probable nicotinate-nucleotide adenylyltransferase from Staphylococcus aureus (strain USA300 / TCH1516).